The following is a 277-amino-acid chain: Diaminopimelate epimerase (277 aa).

The substrate site is built by asparagine 11 and asparagine 65. The active-site Proton donor is cysteine 74. Residues 75–76 (GN), asparagine 180, and 198–199 (ER) each bind substrate. The Proton acceptor role is filled by cysteine 208. 209–210 (GT) serves as a coordination point for substrate.

It belongs to the diaminopimelate epimerase family. As to quaternary structure, homodimer.

Its subcellular location is the cytoplasm. The enzyme catalyses (2S,6S)-2,6-diaminopimelate = meso-2,6-diaminopimelate. Its pathway is amino-acid biosynthesis; L-lysine biosynthesis via DAP pathway; DL-2,6-diaminopimelate from LL-2,6-diaminopimelate: step 1/1. Catalyzes the stereoinversion of LL-2,6-diaminopimelate (L,L-DAP) to meso-diaminopimelate (meso-DAP), a precursor of L-lysine and an essential component of the bacterial peptidoglycan. The sequence is that of Diaminopimelate epimerase from Gemmatimonas aurantiaca (strain DSM 14586 / JCM 11422 / NBRC 100505 / T-27).